Here is a 279-residue protein sequence, read N- to C-terminus: tRNA (guanine-N(1)-)-methyltransferase (279 aa).

S-adenosyl-L-methionine is bound by residues Gly-132 and Ile-152–Leu-157.

Belongs to the RNA methyltransferase TrmD family. As to quaternary structure, homodimer.

The protein resides in the cytoplasm. The catalysed reaction is guanosine(37) in tRNA + S-adenosyl-L-methionine = N(1)-methylguanosine(37) in tRNA + S-adenosyl-L-homocysteine + H(+). Specifically methylates guanosine-37 in various tRNAs. The sequence is that of tRNA (guanine-N(1)-)-methyltransferase from Saccharophagus degradans (strain 2-40 / ATCC 43961 / DSM 17024).